Here is a 367-residue protein sequence, read N- to C-terminus: CCCH-type zinc finger protein moe-3 (367 aa).

Residues 1-15 (MSKVKGDLEKSDKRP) are compositionally biased toward basic and acidic residues. Positions 1 to 57 (MSKVKGDLEKSDKRPPSSMSTGSADSGVFSSGVHASSPSHSQGSSSQSGPPSPTTQL) are disordered. A compositionally biased stretch (low complexity) spans 30–49 (SSGVHASSPSHSQGSSSQSG). The stretch at 63–92 (ETANLIAVNEQLRKEIAENKQIQTNQMRAL) forms a coiled coil. The disordered stretch occupies residues 107-126 (SISPHHGFPQRPPRGERRMQ). 2 C3H1-type zinc fingers span residues 130–158 (SYKTVICQAWLESKTCTFAENCRFAHGEE) and 172–200 (KYKTKLCDKYTTTGLCPYGKRCLFIHPDN). The interval 235-268 (NTRNSYNQQPPPMGGLEMQSSPMKSSSDSSHMRS) is disordered. The span at 252-268 (MQSSPMKSSSDSSHMRS) shows a compositional bias: low complexity.

In terms of tissue distribution, exclusively expressed in the hermaphrodite gonad. Weakly distributed throughout gonadal oocytes from the mitotic stage to the developing diakinesis stage, with expression restricted to the distal region of the gonad.

Its function is as follows. Zinc-finger protein that may play a role in oocyte maturation and fertility. The chain is CCCH-type zinc finger protein moe-3 from Caenorhabditis elegans.